The primary structure comprises 173 residues: RNA pyrophosphohydrolase (173 aa).

A Nudix hydrolase domain is found at 6–149 (GFRANVGIIL…KRSVYRRALQ (144 aa)). The Nudix box motif lies at 38–59 (GGIDRGETPMDAMYRELWEEVG).

It belongs to the Nudix hydrolase family. RppH subfamily. It depends on a divalent metal cation as a cofactor.

Its function is as follows. Accelerates the degradation of transcripts by removing pyrophosphate from the 5'-end of triphosphorylated RNA, leading to a more labile monophosphorylated state that can stimulate subsequent ribonuclease cleavage. This Psychrobacter cryohalolentis (strain ATCC BAA-1226 / DSM 17306 / VKM B-2378 / K5) protein is RNA pyrophosphohydrolase.